Consider the following 485-residue polypeptide: ATP synthase subunit beta 2 (485 aa).

Residues 1–10 (MSGMGEKSEQ) are compositionally biased toward basic and acidic residues. The disordered stretch occupies residues 1–27 (MSGMGEKSEQISKSARSTDPQEQESVA). Polar residues predominate over residues 11–24 (ISKSARSTDPQEQE). 177–184 (GGAGVGKT) contributes to the ATP binding site.

Belongs to the ATPase alpha/beta chains family. F-type ATPases have 2 components, CF(1) - the catalytic core - and CF(0) - the membrane proton channel. CF(1) has five subunits: alpha(3), beta(3), gamma(1), delta(1), epsilon(1). CF(0) has three main subunits: a(1), b(2) and c(9-12). The alpha and beta chains form an alternating ring which encloses part of the gamma chain. CF(1) is attached to CF(0) by a central stalk formed by the gamma and epsilon chains, while a peripheral stalk is formed by the delta and b chains.

The protein localises to the cell inner membrane. The enzyme catalyses ATP + H2O + 4 H(+)(in) = ADP + phosphate + 5 H(+)(out). Produces ATP from ADP in the presence of a proton gradient across the membrane. The catalytic sites are hosted primarily by the beta subunits. This chain is ATP synthase subunit beta 2, found in Nitrosomonas eutropha (strain DSM 101675 / C91 / Nm57).